We begin with the raw amino-acid sequence, 450 residues long: Beclin-1 (450 aa).

Residue Met1 is modified to N-acetylmethionine. 2 positions are modified to phosphoserine: Ser15 and Ser30. The interval 48–72 is disordered; that stretch reads TTAQAKPGETQEEETNSGEEPFIET. 3 positions are modified to phosphoserine; by AMPK: Ser90, Ser93, and Ser96. The BH3 motif lies at 108 to 127; sequence TMENLSRRLKVTGDLFDIMS. The interval 112 to 159 is interaction with BCL2 and BCL2L1; it reads LSRRLKVTGDLFDIMSGQTDVDHPLCEECTDTLLDQLDTQLNVTENEC. Thr119 is subject to Phosphothreonine; by DAPK1. Residues 142 to 269 are a coiled coil; the sequence is DTLLDQLDTQ…QLDKLKKTNV (128 aa). An evolutionary conserved domain (ECD) region spans residues 245-450; it reads DELKSVENQM…AWVSSQFYNK (206 aa). Glycyl lysine isopeptide (Lys-Gly) (interchain with G-Cter in ubiquitin) cross-links involve residues Lys402 and Lys437. A required for membrane-association region spans residues 425–450; the sequence is WTKALKFMLTNLKWGLAWVSSQFYNK.

This sequence belongs to the beclin family. A homodimeric form is proposed to exist; this metastable form readily transits to ATG14- or UVRAG-containing complexes with BECN1:UVRAG being more stable than BECN1:ATG14. Component of the PI3K (PI3KC3/PI3K-III/class III phosphatidylinositol 3-kinase) complex the core of which is composed of the catalytic subunit PIK3C3, the regulatory subunit PIK3R4 and BECN1 associating with additional regulatory/auxiliary subunits to form alternative complex forms. Alternative complex forms containing a fourth regulatory subunit in a mutually exclusive manner are PI3K complex I (PI3KC3-C1) containing ATG14, and PI3K complex II (PI3KC3-C2) containing UVRAG. PI3KC3-C1 displays a V-shaped architecture with PIK3R4 serving as a bridge between PIK3C3 and the ATG14:BECN1 subcomplex. Both, PI3KC3-C1 and PI3KC3-C2, can associate with further regulatory subunits, such as RUBCN, SH3GLB1/Bif-1 and AMBRA1. PI3KC3-C1 probably associates with PIK3CB. Forms a complex with PPP2CA and AMBRA1; AMBRA1 and BECN1 components of the complex regulate MYC stability via different pathways. Component of the complex, at least composed of LRPPRC, BECN1 and BCL2; the interactions prevent BECN1 from forming an autophagy-inducing complex with PIK3C3. Interacts with AMBRA1, GOPC, GRID2. Interacts with BCL2 and BCL2L1 isoform Bcl-X(L); the interaction inhibits BECN1 function in promoting autophagy by interfering with the formation of the PI3K complex. Interacts with cytosolic HMGB1; inhibits the interaction of BECN1 and BCL2 leading to promotion of autophagy. Interacts with USP10, USP13, VMP1, DAPK1, RAB39A. Interacts with the poly-Gln domain of ATXN3; the interaction causes deubiquitination at Lys-402 and stabilizes BECN1. Interacts with SLAMF1. Interacts with TRIM5; the interaction causes activation of BECN1 by causing its dissociation from its inhibitors BCL2 and TAB2. Interacts with active ULK1 (phosphorylated on 'Ser-317') and MEFV simultaneously. Interacts with WDR81 and WDR91; negatively regulates the PI3 kinase/PI3K activity associated with endosomal membranes. Interacts with LAPTM4B; competes with EGFR for LAPTM4B binding; regulates EGFR activity. Interacts with TRIM50. Interacts with TRIM16. Interacts with ATG14; this interaction is increased in the absence of TMEM39A. Interacts with WASHC1; preventing interaction with AMBRA1 and the DCX(AMBRA1) complex and subsequent ubiquitination. Interacts with TRIM17. Interacts with BCL2L10/BCL-B (via BH1 domain). Interacts with SH3BGRL. Interacts with IRGM; enhancing BECN1-interacting partners and influencing the composition of the BECN1 complex. Interacts with ARMC3. Interacts with LRPPRC. In terms of processing, phosphorylation at Thr-119 by DAPK1 reduces its interaction with BCL2 and BCL2L1 and promotes induction of autophagy. In response to autophagic stimuli, phosphorylated at serine residues by AMPK in an ATG14-dependent manner, and this phosphorylation is critical for maximally efficient autophagy. Polyubiquitinated by NEDD4, both with 'Lys-11'- and 'Lys-63'-linkages. 'Lys-11'-linked polyubiquitination leads to degradation and is enhanced when the stabilizing interaction partner VPS34 is depleted. Deubiquitinated by USP10 and USP13, leading to stabilize the PIK3C3/VPS34-containing complexes. Polyubiquitinated at Lys-402 with 'Lys-48'-linkages. 'Lys-48'-linked polyubiquitination of Lys-402 leads to degradation. Deubiquitinated by ATXN3, leading to stabilization. Ubiquitinated at Lys-437 via 'Lys-63'-linkage by the DCX(AMBRA1) complex, thereby increasing the association between BECN1 and PIK3C3 to promote PIK3C3 activity. 'Lys-48'-linked ubiquitination by RNF216 leads to proteasomal degradation and autophagy inhibition. Post-translationally, proteolytically processed by caspases including CASP8 and CASP3; the C-terminal fragments lack autophagy-inducing capacity and are proposed to induce apoptosis. Thus the cleavage is proposed to be an determinant to switch from autophagy to apoptosis pathways affecting cellular homeostasis including viral infections and survival of tumor cells.

The protein resides in the cytoplasm. The protein localises to the golgi apparatus. Its subcellular location is the trans-Golgi network membrane. It is found in the endosome membrane. It localises to the endoplasmic reticulum membrane. The protein resides in the mitochondrion membrane. The protein localises to the cytoplasmic vesicle. Its subcellular location is the autophagosome. It is found in the mitochondrion. It localises to the nucleus. Functionally, plays a central role in autophagy. Acts as a core subunit of the PI3K complex that mediates formation of phosphatidylinositol 3-phosphate; different complex forms are believed to play a role in multiple membrane trafficking pathways: PI3KC3-C1 is involved in initiation of autophagosomes and PI3KC3-C2 in maturation of autophagosomes and endocytosis. Involved in regulation of degradative endocytic trafficking and required for the abscission step in cytokinesis, probably in the context of PI3KC3-C2. Essential for the formation of PI3KC3-C2 but not PI3KC3-C1 PI3K complex forms. Involved in endocytosis. May play a role in antiviral host defense. Its function is as follows. Beclin-1-C 35 kDa localized to mitochondria can promote apoptosis; it induces the mitochondrial translocation of BAX and the release of proapoptotic factors. This Pongo abelii (Sumatran orangutan) protein is Beclin-1 (BECN1).